The sequence spans 312 residues: tRNA dimethylallyltransferase (312 aa).

An ATP-binding site is contributed by 10–17; sequence GPTGVGKT. 12–17 contributes to the substrate binding site; sequence TGVGKT.

Belongs to the IPP transferase family. In terms of assembly, monomer. It depends on Mg(2+) as a cofactor.

The enzyme catalyses adenosine(37) in tRNA + dimethylallyl diphosphate = N(6)-dimethylallyladenosine(37) in tRNA + diphosphate. Catalyzes the transfer of a dimethylallyl group onto the adenine at position 37 in tRNAs that read codons beginning with uridine, leading to the formation of N6-(dimethylallyl)adenosine (i(6)A). The protein is tRNA dimethylallyltransferase of Coprothermobacter proteolyticus (strain ATCC 35245 / DSM 5265 / OCM 4 / BT).